We begin with the raw amino-acid sequence, 389 residues long: S-adenosylmethionine synthase (389 aa).

His18 contributes to the ATP binding site. Mg(2+) is bound at residue Asp20. Residue Glu46 participates in K(+) binding. Positions 59 and 103 each coordinate L-methionine. The flexible loop stretch occupies residues 103 to 113 (QSADIAMGVDS). Residues 168-170 (DSK), Asp244, 250-251 (RK), Ala267, and Lys271 contribute to the ATP site. Asp244 is a binding site for L-methionine. L-methionine is bound at residue Lys275.

The protein belongs to the AdoMet synthase family. Homotetramer; dimer of dimers. Mg(2+) serves as cofactor. K(+) is required as a cofactor.

It localises to the cytoplasm. The catalysed reaction is L-methionine + ATP + H2O = S-adenosyl-L-methionine + phosphate + diphosphate. It participates in amino-acid biosynthesis; S-adenosyl-L-methionine biosynthesis; S-adenosyl-L-methionine from L-methionine: step 1/1. In terms of biological role, catalyzes the formation of S-adenosylmethionine (AdoMet) from methionine and ATP. The overall synthetic reaction is composed of two sequential steps, AdoMet formation and the subsequent tripolyphosphate hydrolysis which occurs prior to release of AdoMet from the enzyme. The protein is S-adenosylmethionine synthase of Pelagibacter ubique (strain HTCC1062).